A 517-amino-acid chain; its full sequence is ATP synthase subunit alpha (517 aa).

174–181 (GDRQTGKT) contacts ATP.

It belongs to the ATPase alpha/beta chains family. In terms of assembly, F-type ATPases have 2 components, CF(1) - the catalytic core - and CF(0) - the membrane proton channel. CF(1) has five subunits: alpha(3), beta(3), gamma(1), delta(1), epsilon(1). CF(0) has three main subunits: a(1), b(2) and c(9-12). The alpha and beta chains form an alternating ring which encloses part of the gamma chain. CF(1) is attached to CF(0) by a central stalk formed by the gamma and epsilon chains, while a peripheral stalk is formed by the delta and b chains.

The protein resides in the cell inner membrane. It carries out the reaction ATP + H2O + 4 H(+)(in) = ADP + phosphate + 5 H(+)(out). Produces ATP from ADP in the presence of a proton gradient across the membrane. The alpha chain is a regulatory subunit. This chain is ATP synthase subunit alpha, found in Variovorax paradoxus (strain S110).